A 223-amino-acid polypeptide reads, in one-letter code: ATP synthase subunit a 1 (223 aa).

5 consecutive transmembrane segments (helical) span residues 20 to 40 (QTIV…AFLT), 78 to 98 (YLSY…FTII), 107 to 127 (SLST…LYGI), 173 to 193 (VMII…LMSV), and 194 to 214 (LGLL…TVYI).

The protein belongs to the ATPase A chain family. As to quaternary structure, F-type ATPases have 2 components, CF(1) - the catalytic core - and CF(0) - the membrane proton channel. CF(1) has five subunits: alpha(3), beta(3), gamma(1), delta(1), epsilon(1). CF(0) has four main subunits: a, b, b' and c.

The protein resides in the cell inner membrane. Functionally, key component of the proton channel; it plays a direct role in the translocation of protons across the membrane. The chain is ATP synthase subunit a 1 from Prosthecochloris aestuarii (strain DSM 271 / SK 413).